The following is a 566-amino-acid chain: Chromatin assembly factor 1 subunit B (566 aa).

WD repeat units follow at residues 11 to 54 (HNKE…DGKA), 64 to 103 (RHTK…ELEP), 127 to 166 (GHLE…KVSI), 169 to 208 (EHKS…VAFN), 228 to 279 (FHDD…RPMG), and 351 to 392 (IHYH…IPLK). 2 disordered regions span residues 411-481 (KSQP…NQPR) and 501-566 (IPLK…KPNK). Polar residues-rich tracts occupy residues 425–437 (TEGT…TLQP) and 469–478 (QPASQSTKVN).

This sequence belongs to the WD repeat HIR1 family. In terms of assembly, interacts with CHAF1A.

It is found in the nucleus. In terms of biological role, acts as a component of the histone chaperone complex chromatin assembly factor 1 (CAF-1), which assembles histone octamers onto DNA during replication and repair. CAF-1 performs the first step of the nucleosome assembly process, bringing newly synthesized histones H3 and H4 to replicating DNA; histones H2A/H2B can bind to this chromatin precursor subsequent to DNA replication to complete the histone octamer. This chain is Chromatin assembly factor 1 subunit B (CHAF1B), found in Gallus gallus (Chicken).